A 92-amino-acid polypeptide reads, in one-letter code: Neuropeptide F (92 aa).

Residues 1-27 (MSQSRPLALLVVAALVAAAVLVAAAEA) form the signal peptide. A propeptide spanning residues 28–51 (QQADGNKLEGLADALKYLQELDRY) is cleaved from the precursor. Phenylalanine amide is present on phenylalanine 60. Positions 64-92 (AELRPDVVDDVIPEEMSADKFWRRFARRR) are excised as a propeptide.

Belongs to the NPY family. As to expression, widely expressed in the nervous system. Expressed in corpora cardiaca, hypocerebral ganglion, frontal ganglion, protocerebrum, antennal lobe, tritocerebrum and thoracic ganglia. Not detected in corpora allata, pars intercerebralis, circumesophageal connectives, subesophageal ganglion, abdominal ganglion and abdominal perisympathetic organs.

The protein resides in the secreted. In terms of biological role, accelerates ovarian maturation in females. In Locusta migratoria (Migratory locust), this protein is Neuropeptide F.